We begin with the raw amino-acid sequence, 527 residues long: Peptide chain release factor 3 (527 aa).

The tr-type G domain occupies 9–277 (AKRRTFAIIS…AVVDWAPRPL (269 aa)). GTP is bound by residues 18 to 25 (SHPDAGKT), 86 to 90 (DTPGH), and 140 to 143 (NKLD).

It belongs to the TRAFAC class translation factor GTPase superfamily. Classic translation factor GTPase family. PrfC subfamily.

Its subcellular location is the cytoplasm. Increases the formation of ribosomal termination complexes and stimulates activities of RF-1 and RF-2. It binds guanine nucleotides and has strong preference for UGA stop codons. It may interact directly with the ribosome. The stimulation of RF-1 and RF-2 is significantly reduced by GTP and GDP, but not by GMP. This chain is Peptide chain release factor 3, found in Pseudomonas entomophila (strain L48).